Reading from the N-terminus, the 648-residue chain is 1-deoxy-D-xylulose-5-phosphate synthase (648 aa).

Thiamine diphosphate contacts are provided by residues H74 and 115 to 117 (GHA). A Mg(2+)-binding site is contributed by D146. Thiamine diphosphate-binding positions include 147-148 (GA), N176, Y292, and E375. Residue N176 coordinates Mg(2+).

It belongs to the transketolase family. DXPS subfamily. In terms of assembly, homodimer. Requires Mg(2+) as cofactor. The cofactor is thiamine diphosphate.

The enzyme catalyses D-glyceraldehyde 3-phosphate + pyruvate + H(+) = 1-deoxy-D-xylulose 5-phosphate + CO2. It functions in the pathway metabolic intermediate biosynthesis; 1-deoxy-D-xylulose 5-phosphate biosynthesis; 1-deoxy-D-xylulose 5-phosphate from D-glyceraldehyde 3-phosphate and pyruvate: step 1/1. Its function is as follows. Catalyzes the acyloin condensation reaction between C atoms 2 and 3 of pyruvate and glyceraldehyde 3-phosphate to yield 1-deoxy-D-xylulose-5-phosphate (DXP). In Synechococcus sp. (strain JA-2-3B'a(2-13)) (Cyanobacteria bacterium Yellowstone B-Prime), this protein is 1-deoxy-D-xylulose-5-phosphate synthase.